A 142-amino-acid chain; its full sequence is Hemoglobin subunit alpha (142 aa).

The 141-residue stretch at 2–142 folds into the Globin domain; the sequence is VLSATDKSNV…VSTVLTSKYR (141 aa). A Phosphoserine modification is found at Ser-4. N6-succinyllysine occurs at positions 8 and 12. Lys-17 is subject to N6-acetyllysine; alternate. Lys-17 carries the N6-succinyllysine; alternate modification. Phosphotyrosine is present on Tyr-25. Ser-36 is modified (phosphoserine). Lys-41 bears the N6-succinyllysine mark. Residue Ser-50 is modified to Phosphoserine. His-59 lines the O2 pocket. His-88 contacts heme b. Residue Ser-103 is modified to Phosphoserine. Thr-109 carries the phosphothreonine modification. Ser-125 carries the post-translational modification Phosphoserine. Residues Thr-135 and Thr-138 each carry the phosphothreonine modification. Residue Ser-139 is modified to Phosphoserine.

The protein belongs to the globin family. Heterotetramer of two alpha chains and two beta chains. As to expression, red blood cells.

Involved in oxygen transport from the lung to the various peripheral tissues. In terms of biological role, hemopressin acts as an antagonist peptide of the cannabinoid receptor CNR1. Hemopressin-binding efficiently blocks cannabinoid receptor CNR1 and subsequent signaling. This Alces alces alces (European moose) protein is Hemoglobin subunit alpha (HBA).